Here is a 130-residue protein sequence, read N- to C-terminus: Small ribosomal subunit protein uS11 (130 aa).

Belongs to the universal ribosomal protein uS11 family. In terms of assembly, part of the 30S ribosomal subunit. Interacts with proteins S7 and S18. Binds to IF-3.

Functionally, located on the platform of the 30S subunit, it bridges several disparate RNA helices of the 16S rRNA. Forms part of the Shine-Dalgarno cleft in the 70S ribosome. In Prochlorococcus marinus (strain MIT 9211), this protein is Small ribosomal subunit protein uS11.